We begin with the raw amino-acid sequence, 574 residues long: Putative thiamine pyrophosphate-containing protein YdaP (574 aa).

Positions 28–55 form a coiled coil; the sequence is DSINEFIEELRHERNQLKFIQTRHEEVA. Thiamine diphosphate is bound at residue Glu-52. FAD-binding positions include 256–277 and 294–313; these read IGTK…LGTS and DSDP…LVCD. The interval 384–464 is thiamine pyrophosphate binding; that stretch reads TVTVWMARHF…ITVVILNNEN (81 aa). Residues Asp-435 and Asn-462 each coordinate Mg(2+).

Belongs to the TPP enzyme family. Mg(2+) serves as cofactor. The cofactor is thiamine diphosphate.

This Bacillus subtilis (strain 168) protein is Putative thiamine pyrophosphate-containing protein YdaP (ydaP).